The following is a 243-amino-acid chain: GTP cyclohydrolase 1 type 2 (243 aa).

Histidine 63, histidine 64, aspartate 102, histidine 209, and glutamate 213 together coordinate a divalent metal cation.

This sequence belongs to the GTP cyclohydrolase I type 2/NIF3 family. In terms of assembly, homohexamer.

The catalysed reaction is GTP + H2O = 7,8-dihydroneopterin 3'-triphosphate + formate + H(+). It participates in cofactor biosynthesis; 7,8-dihydroneopterin triphosphate biosynthesis; 7,8-dihydroneopterin triphosphate from GTP: step 1/1. In terms of biological role, converts GTP to dihydroneopterin triphosphate. This Helicobacter pylori (strain J99 / ATCC 700824) (Campylobacter pylori J99) protein is GTP cyclohydrolase 1 type 2.